Here is a 148-residue protein sequence, read N- to C-terminus: 1,4-dihydroxy-2-naphthoyl-CoA hydrolase (148 aa).

Residue aspartate 15 is part of the active site.

Belongs to the 4-hydroxybenzoyl-CoA thioesterase family. DHNA-CoA hydrolase subfamily.

The enzyme catalyses 1,4-dihydroxy-2-naphthoyl-CoA + H2O = 1,4-dihydroxy-2-naphthoate + CoA + H(+). It participates in cofactor biosynthesis; phylloquinone biosynthesis. The protein operates within quinol/quinone metabolism; 1,4-dihydroxy-2-naphthoate biosynthesis; 1,4-dihydroxy-2-naphthoate from chorismate: step 7/7. In terms of biological role, catalyzes the hydrolysis of 1,4-dihydroxy-2-naphthoyl-CoA (DHNA-CoA) to 1,4-dihydroxy-2-naphthoate (DHNA), a reaction involved in phylloquinone (vitamin K1) biosynthesis. The chain is 1,4-dihydroxy-2-naphthoyl-CoA hydrolase from Nostoc punctiforme (strain ATCC 29133 / PCC 73102).